Here is a 150-residue protein sequence, read N- to C-terminus: 3-dehydroquinate dehydratase (150 aa).

The active-site Proton acceptor is Y26. Positions 77, 83, and 90 each coordinate substrate. Residue H103 is the Proton donor of the active site. Residues L104 to S105 and R114 each bind substrate.

It belongs to the type-II 3-dehydroquinase family. In terms of assembly, homododecamer.

It carries out the reaction 3-dehydroquinate = 3-dehydroshikimate + H2O. It functions in the pathway metabolic intermediate biosynthesis; chorismate biosynthesis; chorismate from D-erythrose 4-phosphate and phosphoenolpyruvate: step 3/7. Its function is as follows. Catalyzes a trans-dehydration via an enolate intermediate. The chain is 3-dehydroquinate dehydratase from Pectobacterium atrosepticum (strain SCRI 1043 / ATCC BAA-672) (Erwinia carotovora subsp. atroseptica).